A 115-amino-acid chain; its full sequence is Cysteine-rich venom protein 5 (115 aa).

An N-terminal signal peptide occupies residues 1–22; sequence MSKVMIIMLVGMIFAIISTVSG. Intrachain disulfides connect cysteine 26–cysteine 41, cysteine 33–cysteine 44, and cysteine 40–cysteine 51. The disordered stretch occupies residues 54 to 115; the sequence is RIGPPINTQP…RKPTNRPRSH (62 aa). 2 stretches are compositionally biased toward basic residues: residues 68–77 and 86–115; these read QPTRRTRGPK and NRTR…PRSH.

Expressed by the venom gland.

The protein localises to the secreted. The chain is Cysteine-rich venom protein 5 from Pimpla hypochondriaca (Parasitoid wasp).